The primary structure comprises 205 residues: MFIVIEGIDGAGKSTQARLLAEWFKKKGYDVVLTKEPTDTAFGKLIRRLVLTGGKEGIIDGARISHEAEALLFAADRAEHVHKLIKPSLKTGKIVISDRYFYSSLAYQWARGLDLEWLIDLNRFAVRPDLVILLDLPVKESMKRINGRSIKTEFDKIAELQKKVRENYLKLAERFPEMRIVNALASVEDIHNDIVALVEHELLKR.

7 to 14 contacts ATP; it reads GIDGAGKS.

It belongs to the thymidylate kinase family.

The enzyme catalyses dTMP + ATP = dTDP + ADP. The protein is Probable thymidylate kinase of Thermococcus onnurineus (strain NA1).